The following is a 131-amino-acid chain: Large-conductance mechanosensitive channel (131 aa).

Transmembrane regions (helical) follow at residues Val-14–Leu-34 and Gly-67–Ile-87.

The protein belongs to the MscL family. Homopentamer.

The protein resides in the cell membrane. In terms of biological role, channel that opens in response to stretch forces in the membrane lipid bilayer. May participate in the regulation of osmotic pressure changes within the cell. The sequence is that of Large-conductance mechanosensitive channel from Bacillus pumilus (strain SAFR-032).